The primary structure comprises 255 residues: Phosphoribosylaminoimidazole-succinocarboxamide synthase A (255 aa).

Belongs to the SAICAR synthetase family.

It carries out the reaction 5-amino-1-(5-phospho-D-ribosyl)imidazole-4-carboxylate + L-aspartate + ATP = (2S)-2-[5-amino-1-(5-phospho-beta-D-ribosyl)imidazole-4-carboxamido]succinate + ADP + phosphate + 2 H(+). It participates in purine metabolism; IMP biosynthesis via de novo pathway; 5-amino-1-(5-phospho-D-ribosyl)imidazole-4-carboxamide from 5-amino-1-(5-phospho-D-ribosyl)imidazole-4-carboxylate: step 1/2. The polypeptide is Phosphoribosylaminoimidazole-succinocarboxamide synthase A (purC1) (Bradyrhizobium diazoefficiens (strain JCM 10833 / BCRC 13528 / IAM 13628 / NBRC 14792 / USDA 110)).